Consider the following 239-residue polypeptide: Skn-1 dependent zygotic transcript 1 protein (239 aa).

Functionally, may have a role in mesendoderm development during embryogenesis. The polypeptide is Skn-1 dependent zygotic transcript 1 protein (Caenorhabditis briggsae).